The following is a 523-amino-acid chain: Inosine-5'-monophosphate dehydrogenase 2 (523 aa).

2 consecutive CBS domains span residues 121-183 (FINN…VQDV) and 184-240 (MTKN…PLAS). Residues 278–280 (DSS) and 328–330 (GMG) contribute to the NAD(+) site. K(+)-binding residues include Gly330 and Gly332. An IMP-binding site is contributed by Ser333. Position 335 (Cys335) interacts with K(+). The active-site Thioimidate intermediate is Cys335. IMP-binding positions include 368–370 (DGG), 391–392 (GG), and 415–419 (YRGMG). The active-site Proton acceptor is Arg437. Gln449 is an IMP binding site. Positions 508, 509, and 510 each coordinate K(+).

The protein belongs to the IMPDH/GMPR family. In terms of assembly, homotetramer. Seems to be able to form heterotetramers composed from more than 1 of the 3 IMPDH gene products (IMD2-4). Requires K(+) as cofactor.

It localises to the cytoplasm. The enzyme catalyses IMP + NAD(+) + H2O = XMP + NADH + H(+). Its pathway is purine metabolism; XMP biosynthesis via de novo pathway; XMP from IMP: step 1/1. Its activity is regulated as follows. Mycophenolic acid (MPA) is a non-competitive inhibitor that prevents formation of the closed enzyme conformation by binding to the same site as the amobile flap. In contrast, mizoribine monophosphate (MZP) is a competitive inhibitor that induces the closed conformation. MPA is a potent inhibitor of mammalian IMPDHs but a poor inhibitor of the bacterial enzymes. MZP is a more potent inhibitor of bacterial IMPDH. Functionally, catalyzes the conversion of inosine 5'-phosphate (IMP) to xanthosine 5'-phosphate (XMP), the first committed and rate-limiting step in the de novo synthesis of guanine nucleotides, and therefore plays an important role in the regulation of cell growth. In contrast to the other IMPDH alleles IMD3 and IMD4, the enzymatic activity of IMD2 seems to be intrinsically drug resistant. This chain is Inosine-5'-monophosphate dehydrogenase 2, found in Saccharomyces cerevisiae (strain ATCC 204508 / S288c) (Baker's yeast).